Consider the following 506-residue polypeptide: Phenylacetaldehyde synthase (506 aa).

Residues Pro101, His202, and His317 each coordinate L-phenylalanine. N6-(pyridoxal phosphate)lysine is present on Lys318.

It belongs to the group II decarboxylase family. In terms of assembly, homotetramer. Pyridoxal 5'-phosphate serves as cofactor. As to expression, highly expressed in corolla limbs and at lower levels in corolla tubes and ovaries.

The catalysed reaction is L-phenylalanine + O2 + H2O + H(+) = 2-phenylacetaldehyde + H2O2 + NH4(+) + CO2. In terms of biological role, bifunctional enzyme that catalyzes the decarboxylation of L-phenylalanine to 2-phenylethylamine, which is then oxidized to form 2-phenylacetaldehyde, a constituent of floral scent. 2-phenylacetaldehyde is a precursor of 2-phenylethanol, another constituent of floral scent. The sequence is that of Phenylacetaldehyde synthase from Petunia hybrida (Petunia).